Consider the following 575-residue polypeptide: Septation ring formation regulator EzrA (575 aa).

At methionine 1–tyrosine 8 the chain is on the extracellular side. Residues leucine 9–leucine 27 form a helical membrane-spanning segment. Topologically, residues arginine 28–phenylalanine 575 are cytoplasmic. 4 coiled-coil regions span residues leucine 105–leucine 191, leucine 265–isoleucine 301, valine 354–aspartate 416, and threonine 456–alanine 526.

Belongs to the EzrA family.

Its subcellular location is the cell membrane. Negative regulator of FtsZ ring formation; modulates the frequency and position of FtsZ ring formation. Inhibits FtsZ ring formation at polar sites. Interacts either with FtsZ or with one of its binding partners to promote depolymerization. The protein is Septation ring formation regulator EzrA of Streptococcus pneumoniae (strain ATCC BAA-255 / R6).